A 668-amino-acid chain; its full sequence is tRNA 5-methylaminomethyl-2-thiouridine biosynthesis bifunctional protein MnmC (668 aa).

Positions 1–245 are tRNA (mnm(5)s(2)U34)-methyltransferase; the sequence is MKHYSIQPAN…KREMLCGVME (245 aa). The segment at 270–668 is FAD-dependent cmnm(5)s(2)U34 oxidoreductase; it reads IGGGIASALL…LLKGKAVKAG (399 aa).

In the N-terminal section; belongs to the methyltransferase superfamily. tRNA (mnm(5)s(2)U34)-methyltransferase family. The protein in the C-terminal section; belongs to the DAO family. FAD serves as cofactor.

It localises to the cytoplasm. It catalyses the reaction 5-aminomethyl-2-thiouridine(34) in tRNA + S-adenosyl-L-methionine = 5-methylaminomethyl-2-thiouridine(34) in tRNA + S-adenosyl-L-homocysteine + H(+). Its function is as follows. Catalyzes the last two steps in the biosynthesis of 5-methylaminomethyl-2-thiouridine (mnm(5)s(2)U) at the wobble position (U34) in tRNA. Catalyzes the FAD-dependent demodification of cmnm(5)s(2)U34 to nm(5)s(2)U34, followed by the transfer of a methyl group from S-adenosyl-L-methionine to nm(5)s(2)U34, to form mnm(5)s(2)U34. This Shigella dysenteriae serotype 1 (strain Sd197) protein is tRNA 5-methylaminomethyl-2-thiouridine biosynthesis bifunctional protein MnmC.